The sequence spans 1406 residues: DNA-directed RNA polymerase subunit beta' (1406 aa).

The Zn(2+) site is built by C70, C72, C85, and C88. Residues D460, D462, and D464 each contribute to the Mg(2+) site. 4 residues coordinate Zn(2+): C814, C889, C896, and C899.

Belongs to the RNA polymerase beta' chain family. As to quaternary structure, the RNAP catalytic core consists of 2 alpha, 1 beta, 1 beta' and 1 omega subunit. When a sigma factor is associated with the core the holoenzyme is formed, which can initiate transcription. The cofactor is Mg(2+). It depends on Zn(2+) as a cofactor.

It catalyses the reaction RNA(n) + a ribonucleoside 5'-triphosphate = RNA(n+1) + diphosphate. Its function is as follows. DNA-dependent RNA polymerase catalyzes the transcription of DNA into RNA using the four ribonucleoside triphosphates as substrates. In Stenotrophomonas maltophilia (strain K279a), this protein is DNA-directed RNA polymerase subunit beta'.